We begin with the raw amino-acid sequence, 90 residues long: Small ribosomal subunit protein uS19 (90 aa).

It belongs to the universal ribosomal protein uS19 family.

In terms of biological role, protein S19 forms a complex with S13 that binds strongly to the 16S ribosomal RNA. This is Small ribosomal subunit protein uS19 from Thioalkalivibrio sulfidiphilus (strain HL-EbGR7).